We begin with the raw amino-acid sequence, 391 residues long: Anhydro-N-acetylmuramic acid kinase (391 aa).

9–16 is a binding site for ATP; that stretch reads GTSVDGID.

This sequence belongs to the anhydro-N-acetylmuramic acid kinase family.

The enzyme catalyses 1,6-anhydro-N-acetyl-beta-muramate + ATP + H2O = N-acetyl-D-muramate 6-phosphate + ADP + H(+). Its pathway is amino-sugar metabolism; 1,6-anhydro-N-acetylmuramate degradation. It functions in the pathway cell wall biogenesis; peptidoglycan recycling. Catalyzes the specific phosphorylation of 1,6-anhydro-N-acetylmuramic acid (anhMurNAc) with the simultaneous cleavage of the 1,6-anhydro ring, generating MurNAc-6-P. Is required for the utilization of anhMurNAc either imported from the medium or derived from its own cell wall murein, and thus plays a role in cell wall recycling. This chain is Anhydro-N-acetylmuramic acid kinase, found in Gloeothece citriformis (strain PCC 7424) (Cyanothece sp. (strain PCC 7424)).